Here is a 412-residue protein sequence, read N- to C-terminus: Peptidase T (412 aa).

His81 is a Zn(2+) binding site. Asp83 is a catalytic residue. Asp144 lines the Zn(2+) pocket. The Proton acceptor role is filled by Glu178. Residues Glu179, Asp201, and His383 each coordinate Zn(2+).

Belongs to the peptidase M20B family. It depends on Zn(2+) as a cofactor.

Its subcellular location is the cytoplasm. The catalysed reaction is Release of the N-terminal residue from a tripeptide.. In terms of biological role, cleaves the N-terminal amino acid of tripeptides. In Bacillus cereus (strain ATCC 14579 / DSM 31 / CCUG 7414 / JCM 2152 / NBRC 15305 / NCIMB 9373 / NCTC 2599 / NRRL B-3711), this protein is Peptidase T.